Here is a 376-residue protein sequence, read N- to C-terminus: Polygalacturonase (376 aa).

A signal peptide spans 1–20 (MASSLKLGLIALLGATAVNA). A disulfide bond links Cys39 and Cys57. The PbH1 1 repeat unit spans residues 170–208 (AKELTLSGITVDTADGDSNGGHNTDAFDVGSSNGVYITS). Asp215 serves as the catalytic Proton donor. Cys217 and Cys233 are joined by a disulfide. PbH1 repeat units lie at residues 223 to 243 (GTNV…SIGS), 252 to 273 (VDGV…RIKT), 281 to 303 (VQGV…VIEQ), and 315 to 360 (TSGV…SITG). The active site involves His237. 2 cysteine pairs are disulfide-bonded: Cys343–Cys348 and Cys367–Cys376.

This sequence belongs to the glycosyl hydrolase 28 family.

The protein localises to the secreted. It catalyses the reaction (1,4-alpha-D-galacturonosyl)n+m + H2O = (1,4-alpha-D-galacturonosyl)n + (1,4-alpha-D-galacturonosyl)m.. In Penicillium griseoroseum, this protein is Polygalacturonase (PGG1).